Reading from the N-terminus, the 469-residue chain is Glutamate--tRNA ligase (469 aa).

Positions 11 to 21 (PSPTGFIHLGN) match the 'HIGH' region motif. The 'KMSKS' region signature appears at 243 to 247 (KMSKR). K246 is a binding site for ATP.

The protein belongs to the class-I aminoacyl-tRNA synthetase family. Glutamate--tRNA ligase type 1 subfamily. As to quaternary structure, monomer.

Its subcellular location is the cytoplasm. The catalysed reaction is tRNA(Glu) + L-glutamate + ATP = L-glutamyl-tRNA(Glu) + AMP + diphosphate. Functionally, catalyzes the attachment of glutamate to tRNA(Glu) in a two-step reaction: glutamate is first activated by ATP to form Glu-AMP and then transferred to the acceptor end of tRNA(Glu). This chain is Glutamate--tRNA ligase, found in Burkholderia orbicola (strain AU 1054).